A 489-amino-acid chain; its full sequence is Diaminopimelate decarboxylase 2, chloroplastic (489 aa).

A chloroplast-targeting transit peptide spans 1–50 (MAAVTQFLSQPSSIRGTLNQYQLNQTSLSRIPFLSLKSTLKPLKRLSVKA). N-acetylalanine is present on A51. Position 130 is an N6-(pyridoxal phosphate)lysine (K130). Pyridoxal 5'-phosphate-binding positions include G309 and 345 to 348 (EPGR). Substrate is bound by residues R348, R384, and Y388. C416 acts as the Proton donor in catalysis. Substrate is bound by residues E417 and Y445. A pyridoxal 5'-phosphate-binding site is contributed by Y445.

Belongs to the Orn/Lys/Arg decarboxylase class-II family. LysA subfamily. In terms of assembly, homodimer. It depends on pyridoxal 5'-phosphate as a cofactor.

It is found in the plastid. The protein localises to the chloroplast. It carries out the reaction meso-2,6-diaminopimelate + H(+) = L-lysine + CO2. The protein operates within amino-acid biosynthesis; L-lysine biosynthesis via DAP pathway; L-lysine from DL-2,6-diaminopimelate: step 1/1. In terms of biological role, specifically catalyzes the decarboxylation of meso-diaminopimelate (meso-DAP) to L-lysine. The sequence is that of Diaminopimelate decarboxylase 2, chloroplastic (LYSA2) from Arabidopsis thaliana (Mouse-ear cress).